The sequence spans 477 residues: Aspartyl/glutamyl-tRNA(Asn/Gln) amidotransferase subunit B (477 aa).

The protein belongs to the GatB/GatE family. GatB subfamily. Heterotrimer of A, B and C subunits.

The enzyme catalyses L-glutamyl-tRNA(Gln) + L-glutamine + ATP + H2O = L-glutaminyl-tRNA(Gln) + L-glutamate + ADP + phosphate + H(+). It catalyses the reaction L-aspartyl-tRNA(Asn) + L-glutamine + ATP + H2O = L-asparaginyl-tRNA(Asn) + L-glutamate + ADP + phosphate + 2 H(+). Allows the formation of correctly charged Asn-tRNA(Asn) or Gln-tRNA(Gln) through the transamidation of misacylated Asp-tRNA(Asn) or Glu-tRNA(Gln) in organisms which lack either or both of asparaginyl-tRNA or glutaminyl-tRNA synthetases. The reaction takes place in the presence of glutamine and ATP through an activated phospho-Asp-tRNA(Asn) or phospho-Glu-tRNA(Gln). The polypeptide is Aspartyl/glutamyl-tRNA(Asn/Gln) amidotransferase subunit B (Sulfurovum sp. (strain NBC37-1)).